Reading from the N-terminus, the 625-residue chain is MNVTSIALRAETWLLAAWHVKVPPMWLEACINWIQEENNNVNLSQAQMNKQVFEQWLLTDLRDLEHPLLPDGILEIPKGELNGFYALQINSLVDVSQPAYSQIQKLRGKNTTNDLVTAEAQVTPKPWEAKPSRMLMLQLTDGIVQIQGMEYQPIPILHSDLPPGTKILIYGNISFRLGVLLLKPENVKVLGGEVDALLEEYAQEKVLARLIGEPDLVVSVIPNNSNENIPRVTDVLDPALGPSDEELLASLDENDELTANNDTSSERCFTTGSSSNTIPTRQSSFEPEFVISPRPKEEPSNLSIHVMDGELDDFSLEEALLLEETVQKEQMETKELQPLTFNRNADRSIERFSHNPNTTNNFSLTCKNGNNNWSEKNVSEQMTNEDKSFGCPSVRDQNRSIFSVHCNVPLAHDFTNKEKNLETDNKIKQTSSSDSHSLNNKILNREVVNYVQKRNSQISNENDCNLQSCSLRSSENSINLSIAMDLYSPPFVYLSVLMASKPKEVTTVKVKAFIVTLTGNLSSSGGIWSITAKVSDGTAYLDVDFVDEILTSLIGFSVPEMKQSKKDPLQYQKFLEGLQKCQRDLIDLCCLMTISFNPSLSKAMVLALQDVNMEHLENLKKRLNK.

N-acetylmethionine is present on M1. Residue S225 is modified to Phosphoserine. The interval 257 to 282 (LTANNDTSSERCFTTGSSSNTIPTRQ) is disordered. 2 positions are modified to phosphoserine: S284 and S292. Residues K334, K387, and K426 each participate in a glycyl lysine isopeptide (Lys-Gly) (interchain with G-Cter in SUMO2) cross-link.

This sequence belongs to the RMI1 family. Component of the RMI complex, containing at least TOP3A, RMI1 and RMI2. The RMI complex interacts with BLM. Directly interacts with RMI2 and TOP3A. May bind DHJ. Interacts (via N-terminal region) with BLM; the interaction is direct.

The protein localises to the nucleus. In terms of biological role, essential component of the RMI complex, a complex that plays an important role in the processing of homologous recombination intermediates to limit DNA crossover formation in cells. Promotes TOP3A binding to double Holliday junctions (DHJ) and hence stimulates TOP3A-mediated dissolution. Required for BLM phosphorylation during mitosis. Within the BLM complex, required for BLM and TOP3A stability. The sequence is that of RecQ-mediated genome instability protein 1 (RMI1) from Homo sapiens (Human).